Consider the following 513-residue polypeptide: MKRALVSVSDKNNLVPFVKGLVANDYEIVSTGGTKRVLDEAGIPTISVEDVTGFPEILDGRVKTLNPYIHGGLLARRELPEHVATLKEHKITPIDLVCVNLYPFKQTIEKPDVTLAEAIENIDIGGPSMVRSASKNYRDVTIVVDQADYDQVLAEIEKDGSTSLETRARLAAKAFRLTASYDALISQYLTEKAGETAPEKLTLTYDLKEAMRYGENSHQKAWLYEDALPKAFSVLQAEQLNGKELSYNNIKDADEALRCVREFSKPTVVAMKHMNPCGIGQGNTLEEAWDRAYVADPVSIFGGVIALNRKVDLATAEKMHKIFLEIIIAPDYDEDALAALKTKKKNLRILKLDFSKKDEATSKETVSVMGGLLVQDQDVLDEDFADWECVTEAKPTQEQLESLLFAWKAVKHTKSNAIVVANNERTLGVGAGQPNRIDSEKIAIDHAAEALDDRAVLASDAFFPFSDCVEYAGKHGIKAIVQPGGSVRDQESIDMANKYGIAMVFTGVRHFRH.

Residues 1–144 enclose the MGS-like domain; sequence MKRALVSVSD…KNYRDVTIVV (144 aa).

The protein belongs to the PurH family.

The catalysed reaction is (6R)-10-formyltetrahydrofolate + 5-amino-1-(5-phospho-beta-D-ribosyl)imidazole-4-carboxamide = 5-formamido-1-(5-phospho-D-ribosyl)imidazole-4-carboxamide + (6S)-5,6,7,8-tetrahydrofolate. The enzyme catalyses IMP + H2O = 5-formamido-1-(5-phospho-D-ribosyl)imidazole-4-carboxamide. It functions in the pathway purine metabolism; IMP biosynthesis via de novo pathway; 5-formamido-1-(5-phospho-D-ribosyl)imidazole-4-carboxamide from 5-amino-1-(5-phospho-D-ribosyl)imidazole-4-carboxamide (10-formyl THF route): step 1/1. It participates in purine metabolism; IMP biosynthesis via de novo pathway; IMP from 5-formamido-1-(5-phospho-D-ribosyl)imidazole-4-carboxamide: step 1/1. The sequence is that of Bifunctional purine biosynthesis protein PurH from Lactobacillus delbrueckii subsp. bulgaricus (strain ATCC BAA-365 / Lb-18).